Here is a 952-residue protein sequence, read N- to C-terminus: Isoleucine--tRNA ligase (952 aa).

A 'HIGH' region motif is present at residues 60–70 (PYANGSLHIGH). Glu562 contacts L-isoleucyl-5'-AMP. The short motif at 603–607 (KMSKS) is the 'KMSKS' region element. ATP is bound at residue Lys606. Positions 921, 924, 941, and 944 each coordinate Zn(2+).

This sequence belongs to the class-I aminoacyl-tRNA synthetase family. IleS type 1 subfamily. In terms of assembly, monomer. The cofactor is Zn(2+).

It is found in the cytoplasm. The enzyme catalyses tRNA(Ile) + L-isoleucine + ATP = L-isoleucyl-tRNA(Ile) + AMP + diphosphate. Functionally, catalyzes the attachment of isoleucine to tRNA(Ile). As IleRS can inadvertently accommodate and process structurally similar amino acids such as valine, to avoid such errors it has two additional distinct tRNA(Ile)-dependent editing activities. One activity is designated as 'pretransfer' editing and involves the hydrolysis of activated Val-AMP. The other activity is designated 'posttransfer' editing and involves deacylation of mischarged Val-tRNA(Ile). The chain is Isoleucine--tRNA ligase from Microcystis aeruginosa (strain NIES-843 / IAM M-2473).